The chain runs to 310 residues: L-lactate dehydrogenase (310 aa).

NAD(+) is bound by residues Val-11, Asp-32, Tyr-62, and 76–77 (GV). Substrate-binding positions include Gln-79, Arg-85, and 117 to 120 (NPVD). Residues 115-117 (ATN) and Ser-140 each bind NAD(+). A substrate-binding site is contributed by 145 to 148 (DTAR). Arg-150 and His-165 together coordinate beta-D-fructose 1,6-bisphosphate. His-172 (proton acceptor) is an active-site residue. Tyr-218 is modified (phosphotyrosine). Thr-227 contacts substrate.

It belongs to the LDH/MDH superfamily. LDH family. Homotetramer.

The protein resides in the cytoplasm. It carries out the reaction (S)-lactate + NAD(+) = pyruvate + NADH + H(+). The protein operates within fermentation; pyruvate fermentation to lactate; (S)-lactate from pyruvate: step 1/1. With respect to regulation, activated by citrate at pH 5. Allosterically activated by fructose 1,6-bisphosphate (FBP) at pH from 5.8 to 7.2. Functionally, catalyzes the conversion of lactate to pyruvate. In Thermus aquaticus, this protein is L-lactate dehydrogenase.